Consider the following 69-residue polypeptide: Omega-oxotoxin-Ol1a (69 aa).

Residues 1–68 (DWECLPLHSS…GKINTCDKYK (68 aa)) form the Oxytoxin-type inhibitor cystine knot (ICK) domain. Cystine bridges form between Cys4/Cys18, Cys11/Cys23, Cys15/Cys64, Cys17/Cys52, and Cys25/Cys50. Position 69 is an asparagine amide (Asn69).

Belongs to the spiderine family. Spiderine subfamily. As to expression, expressed by the venom gland.

The protein resides in the secreted. Its function is as follows. Weak blocker of vertebrate P/Q-, N- and L-type voltage-gated calcium channels (Cav1 and Cav2). Is both paralytic and lethal when injected into lepidopteran larvae. Is not toxic to mice. This is Omega-oxotoxin-Ol1a from Oxyopes lineatus (Lynx spider).